A 156-amino-acid chain; its full sequence is H/ACA ribonucleoprotein complex subunit NHP2 (156 aa).

Belongs to the eukaryotic ribosomal protein eL8 family. In terms of assembly, component of the small nucleolar ribonucleoprotein particles containing H/ACA-type snoRNAs (H/ACA snoRNPs). The protein component of the H/ACA snoRNP contains CBF5, GAR1, NHP2 and NOP10. The complex contains a stable core composed of CBF5 and NOP10, to which GAR1 and NHP2 subsequently bind. Interacts with SHQ1. Interacts with NAF1.

It localises to the nucleus. The protein resides in the nucleolus. In terms of biological role, non-catalytic component of the H/ACA small nucleolar ribonucleoprotein (H/ACA snoRNP), which catalyzes pseudouridylation of rRNA and is required for ribosome biogenesis. This involves the isomerization of uridine such that the ribose is subsequently attached to C5, instead of the normal N1. Pseudouridine ('psi') residues may serve to stabilize the conformation of rRNAs. The H/ACA snoRNP complex also mediates pseudouridylation of other types of RNAs. The H/ACA snoRNP complex mediates pseudouridylation at position 93 in U2 snRNA. Essential for growth. Directly binds H/ACA snoRNAs. The protein is H/ACA ribonucleoprotein complex subunit NHP2 (NHP2) of Saccharomyces cerevisiae (strain ATCC 204508 / S288c) (Baker's yeast).